The chain runs to 498 residues: Aspartyl/glutamyl-tRNA(Asn/Gln) amidotransferase subunit B (498 aa).

The protein belongs to the GatB/GatE family. GatB subfamily. As to quaternary structure, heterotrimer of A, B and C subunits.

It carries out the reaction L-glutamyl-tRNA(Gln) + L-glutamine + ATP + H2O = L-glutaminyl-tRNA(Gln) + L-glutamate + ADP + phosphate + H(+). The catalysed reaction is L-aspartyl-tRNA(Asn) + L-glutamine + ATP + H2O = L-asparaginyl-tRNA(Asn) + L-glutamate + ADP + phosphate + 2 H(+). Functionally, allows the formation of correctly charged Asn-tRNA(Asn) or Gln-tRNA(Gln) through the transamidation of misacylated Asp-tRNA(Asn) or Glu-tRNA(Gln) in organisms which lack either or both of asparaginyl-tRNA or glutaminyl-tRNA synthetases. The reaction takes place in the presence of glutamine and ATP through an activated phospho-Asp-tRNA(Asn) or phospho-Glu-tRNA(Gln). The sequence is that of Aspartyl/glutamyl-tRNA(Asn/Gln) amidotransferase subunit B from Erythrobacter litoralis (strain HTCC2594).